A 631-amino-acid chain; its full sequence is Interferon-induced GTP-binding protein Mx1 (631 aa).

Positions 33-306 (DLALPAIAVI…LTSHICKSLP (274 aa)) constitute a Dynamin-type G domain. Positions 43-50 (GDQSSGKS) are G1 motif. 43 to 50 (GDQSSGKS) contacts GTP. The interval 68 to 70 (VTR) is G2 motif. The interval 144 to 147 (DLPG) is G3 motif. GTP contacts are provided by residues 144–148 (DLPGI) and 213–216 (TKPD). The interval 213 to 216 (TKPD) is G4 motif. The G5 motif stretch occupies residues 245-248 (KCRG). The tract at residues 307–332 (LLEDQINSSHQSASEELQKYGADIPE) is bundle signaling element (BSE). The tract at residues 332 to 499 (EDDRTRMSFL…HFQMEQIVYC (168 aa)) is middle domain. Residues 333–601 (DDRTRMSFLV…TSKCSWFLEE (269 aa)) are stalk. The tract at residues 520–522 (KTK) is critical for lipid-binding. Residues 543–631 (TTEMTQHLKA…ARQKLAKFSD (89 aa)) form the GED domain.

This sequence belongs to the TRAFAC class dynamin-like GTPase superfamily. Dynamin/Fzo/YdjA family. In terms of assembly, homooligomer. Oligomerizes into multimeric filamentous or ring-like structures by virtue of its stalk domain. Oligomerization is critical for GTPase activity, protein stability, and recognition of viral target structures. Interacts with TRPC1, TRPC3, TRPC4, TRPC5, TRPC6 and TRPC7. Interacts with HSPA5. Interacts with TUBB/TUBB5. Interacts with DDX39A and DDX39B. ISGylated.

Its subcellular location is the cytoplasm. The protein localises to the nucleus. It localises to the endoplasmic reticulum membrane. It is found in the perinuclear region. Interferon-induced dynamin-like GTPase with antiviral activity against influenza A virus, (IAV), influenza B virus (IBV) and Thogoto virus (THOV). Inhibits FLUAV by interfering with the process of primary transcription, probably by affecting the viral polymerase function. The protein is Interferon-induced GTP-binding protein Mx1 (Mx1) of Mus musculus (Mouse).